The following is a 266-amino-acid chain: Ribosomal RNA small subunit methyltransferase J (266 aa).

Residues 109–110, 125–126, and Asp185 each bind S-adenosyl-L-methionine; these read RD and ER.

This sequence belongs to the methyltransferase superfamily. RsmJ family.

The protein localises to the cytoplasm. It catalyses the reaction guanosine(1516) in 16S rRNA + S-adenosyl-L-methionine = N(2)-methylguanosine(1516) in 16S rRNA + S-adenosyl-L-homocysteine + H(+). In terms of biological role, specifically methylates the guanosine in position 1516 of 16S rRNA. The polypeptide is Ribosomal RNA small subunit methyltransferase J (Cellvibrio japonicus (strain Ueda107) (Pseudomonas fluorescens subsp. cellulosa)).